Reading from the N-terminus, the 284-residue chain is Prolyl 4-hydroxylase subunit alpha (284 aa).

The Fe2OG dioxygenase domain occupies 169–284 (NFNSIKTQTQ…PRIAITTWIY (116 aa)). Residues His-191, Asp-193, and His-266 each coordinate Fe cation. Arg-276 provides a ligand contact to 2-oxoglutarate.

The protein belongs to the P4HA family. In terms of assembly, heterotetramer of two alpha-1 chains and two beta chains (the beta chain is the multi-functional PDI). Fe(2+) serves as cofactor. Requires L-ascorbate as cofactor.

Its subcellular location is the cytoplasm. The enzyme catalyses L-prolyl-[Skp1 protein] + 2-oxoglutarate + O2 = trans-4-hydroxy-L-prolyl-[Skp1 protein] + succinate + CO2. With respect to regulation, inhibited by the prolyl-hydroxylase inhibitors alpha,alpha'-dipyridyl and ethyl 3,4-dihydroxybenzoate. Its function is as follows. Catalyzes the post-translational formation of 4-hydroxyproline. Probably hydroxylates skp1 on Pro-143. The protein is Prolyl 4-hydroxylase subunit alpha (phyA) of Dictyostelium discoideum (Social amoeba).